The chain runs to 419 residues: DNA-directed RNA polymerase I subunit RPA49 (419 aa).

A phosphoserine mark is found at Ser35 and Ser163. Position 373 is an N6-acetyllysine (Lys373). Positions 397–419 (GTLSLPLPPAQTSDRLAKRRKIT) are disordered.

It belongs to the eukaryotic RPA49/POLR1E RNA polymerase subunit family. In terms of assembly, component of the RNA polymerase I (Pol I) complex consisting of 13 subunits: a ten-subunit catalytic core composed of POLR1A/RPA1, POLR1B/RPA2, POLR1C/RPAC1, POLR1D/RPAC2, POLR1H/RPA12, POLR2E/RPABC1, POLR2F/RPABC2, POLR2H/RPABC3, POLR2K/RPABC4 and POLR2L/RPABC5; a mobile stalk subunit POLR1F/RPA43 protruding from the core and additional subunits homologous to general transcription factors POLR1E/RPA49 and POLR1G/RPA34. Forms a heterodimer with POLR1G/RPA34. Interacts with POLR1G. Also binds UBTF/UBF. Interacts with PWP1. Acetylated at Lys-373 by CREBBP/CBP, leading to decreased RNA polymerase I transcription. In normal conditions, deacetylated by SIRT7, promoting the association of RNA polymerase I with the rDNA promoter region and coding region. In response to stress, SIRT7 is released from nucleoli leading to hyperacetylation of POLR1E/PAF53 and decreased association of RNA polymerase I with the rDNA promoter region.

It localises to the nucleus. The protein localises to the nucleolus. Its function is as follows. Component of RNA polymerase I (Pol I), a DNA-dependent RNA polymerase which synthesizes ribosomal RNA precursors using the four ribonucleoside triphosphates as substrates. Appears to be involved in the formation of the initiation complex at the promoter by mediating the interaction between Pol I and UBTF/UBF. In Homo sapiens (Human), this protein is DNA-directed RNA polymerase I subunit RPA49 (POLR1E).